The following is a 523-amino-acid chain: UDP-glucuronosyltransferase 3A1 (523 aa).

An N-terminal signal peptide occupies residues 1–22 (MAGQQALLLFGFILPGLLFSEA). Topologically, residues 23-483 (AKILTVSLVG…HAFQQPWYEQ (461 aa)) are extracellular. Asn52 is a glycosylation site (N-linked (GlcNAc...) asparagine). The chain crosses the membrane as a helical span at residues 484–504 (YLLDVFLFLLVVTLGTMWLCG). Residues 505 to 523 (KLLGLVARWLCGARKLKKA) are Cytoplasmic-facing.

It belongs to the UDP-glycosyltransferase family.

It is found in the membrane. It catalyses the reaction glucuronate acceptor + UDP-alpha-D-glucuronate = acceptor beta-D-glucuronoside + UDP + H(+). UDP-glucuronosyltransferases catalyze phase II biotransformation reactions in which lipophilic substrates are conjugated with glucuronic acid to increase water solubility and enhance excretion. They are of major importance in the conjugation and subsequent elimination of potentially toxic xenobiotics and endogenous compounds. The protein is UDP-glucuronosyltransferase 3A1 (UGT3A1) of Bos taurus (Bovine).